A 442-amino-acid chain; its full sequence is Cyclin-A1-2 (442 aa).

Composition is skewed to polar residues over residues M1–N12 and I39–G63. The tract at residues M1–A72 is disordered.

Belongs to the cyclin family. Cyclin AB subfamily. As to quaternary structure, interacts with CDC20-1, CDC20-2, FZR2/CCS52A1 and FZR1/CCS52A2. As to expression, expressed in roots, stems and flowers.

The protein localises to the cytoplasm. It localises to the nucleus. Involved in the regulation of male meiosis progression. In Arabidopsis thaliana (Mouse-ear cress), this protein is Cyclin-A1-2 (CYCA1-2).